We begin with the raw amino-acid sequence, 96 residues long: Large ribosomal subunit protein eL43 (96 aa).

Residues Cys-41, Cys-44, Cys-59, and Cys-62 each coordinate Zn(2+). The segment at Cys-41–Cys-62 adopts a C4-type zinc-finger fold.

This sequence belongs to the eukaryotic ribosomal protein eL43 family. Putative zinc-binding subfamily. Part of the 50S ribosomal subunit. The cofactor is Zn(2+).

Its function is as follows. Binds to the 23S rRNA. The polypeptide is Large ribosomal subunit protein eL43 (Methanococcus maripaludis (strain DSM 14266 / JCM 13030 / NBRC 101832 / S2 / LL)).